Reading from the N-terminus, the 1201-residue chain is HEAT repeat-containing protein 6 (1201 aa).

Residues 1–25 (MAGKVTFLGSNSSFSPDGKTQGFKS) are disordered. Residues 182-221 (PDLLGPSGVLVKYGDPKQPDIELRRSAVHCIANLCLSVPS) form an HEAT 1 repeat. The disordered stretch occupies residues 321–390 (AVKPEPAQDT…SQSSMLTSPS (70 aa)). Positions 341-352 (QKKRKSRGKGKK) are enriched in basic residues. The segment covering 375–390 (SGWSHGSQSSMLTSPS) has biased composition (polar residues). HEAT repeat units lie at residues 460-498 (GIGG…GSRQ), 523-560 (SIRE…NVPY), and 566-603 (GLLS…TQAP). Residues 618–633 (SSLGSGISTPQESPLS) show a composition bias toward polar residues. Positions 618-653 (SSLGSGISTPQESPLSWRQPARRDEEASSPAAAEGP) are disordered.

This chain is HEAT repeat-containing protein 6 (heatr6), found in Danio rerio (Zebrafish).